We begin with the raw amino-acid sequence, 290 residues long: Probable septum site-determining protein MinC (290 aa).

Belongs to the MinC family. As to quaternary structure, interacts with MinD and FtsZ.

In terms of biological role, cell division inhibitor that blocks the formation of polar Z ring septums. Rapidly oscillates between the poles of the cell to destabilize FtsZ filaments that have formed before they mature into polar Z rings. Prevents FtsZ polymerization. This Heliobacterium modesticaldum (strain ATCC 51547 / Ice1) protein is Probable septum site-determining protein MinC.